The following is a 739-amino-acid chain: UPF0313 protein YgiQ (739 aa).

The region spanning A372–A650 is the Radical SAM core domain. [4Fe-4S] cluster-binding residues include C386, C390, and C393. The segment at R685 to R739 is disordered. Residues M704 to P724 show a composition bias toward polar residues. Basic residues predominate over residues A729–R739.

Belongs to the UPF0313 family. The cofactor is [4Fe-4S] cluster.

This Escherichia coli (strain K12) protein is UPF0313 protein YgiQ (ygiQ).